Here is a 362-residue protein sequence, read N- to C-terminus: B3 domain-containing protein IDEF1 (362 aa).

The interval 30–91 (VPFPNPFPAP…TPTPTPRGFA (62 aa)) is disordered. Basic residues predominate over residues 48–70 (PHNHNHNHNHNHNIHNSHNHNHN). Residues 253–355 (LRKELTKSDV…KFIIRGEKAI (103 aa)) constitute a DNA-binding region (TF-B3).

In terms of processing, polyubiquitinated. Ubiquitination leads to its subsequent degradation via the proteasome pathway. Expressed in roots.

The protein resides in the nucleus. In terms of biological role, transcription regulator involved in iron deficiency response and tolerance. May regulate directly iron transporters or other transcription factors involved in iron-deficiency response. Binds specifically to the DNA sequence 5'-CATGC-3' of the IDE1 element found in the promoter of the barley iron deficiency-inducible gene IDS2. In Oryza sativa subsp. japonica (Rice), this protein is B3 domain-containing protein IDEF1 (IDEF1).